Here is a 410-residue protein sequence, read N- to C-terminus: FBD-associated F-box protein At5g38590 (410 aa).

Residues 1–47 (MDKINGLPDDLLVKILSYVPTDIAVSTSILSKRWEFLWMWLPNLDYT) enclose the F-box domain. Residues 335–385 (GWNQPSSVPECLLSSLQIFKWPQYLGRPEDRDIAVYILKNARHLKKTTILA) enclose the FBD domain.

This Arabidopsis thaliana (Mouse-ear cress) protein is FBD-associated F-box protein At5g38590.